Here is a 276-residue protein sequence, read N- to C-terminus: 4-deoxy-L-threo-5-hexosulose-uronate ketol-isomerase (276 aa).

Positions 194, 196, 201, and 243 each coordinate Zn(2+).

This sequence belongs to the KduI family. Requires Zn(2+) as cofactor.

It carries out the reaction 5-dehydro-4-deoxy-D-glucuronate = 3-deoxy-D-glycero-2,5-hexodiulosonate. It functions in the pathway glycan metabolism; pectin degradation; 2-dehydro-3-deoxy-D-gluconate from pectin: step 4/5. In terms of biological role, catalyzes the isomerization of 5-dehydro-4-deoxy-D-glucuronate to 3-deoxy-D-glycero-2,5-hexodiulosonate. The sequence is that of 4-deoxy-L-threo-5-hexosulose-uronate ketol-isomerase from Halalkalibacterium halodurans (strain ATCC BAA-125 / DSM 18197 / FERM 7344 / JCM 9153 / C-125) (Bacillus halodurans).